An 82-amino-acid polypeptide reads, in one-letter code: Small ribosomal subunit protein uS17 (82 aa).

This sequence belongs to the universal ribosomal protein uS17 family. As to quaternary structure, part of the 30S ribosomal subunit.

Its function is as follows. One of the primary rRNA binding proteins, it binds specifically to the 5'-end of 16S ribosomal RNA. The sequence is that of Small ribosomal subunit protein uS17 from Shewanella amazonensis (strain ATCC BAA-1098 / SB2B).